A 727-amino-acid chain; its full sequence is Translation initiation factor IF-2, mitochondrial (727 aa).

Residues 1–29 constitute a mitochondrion transit peptide; the sequence is MNQKLLKLENLLRFHTICRQVHSPSQRRL. The region spanning 178–346 is the tr-type G domain; the sequence is PRSPVVTVMG…ATIALAEILE (169 aa). A G1 region spans residues 187-194; it reads GHVDHGKT. 187–194 contributes to the GTP binding site; sequence GHVDHGKT. The segment at 212-216 is G2; it reads GITQH. GTP-binding positions include 234 to 237 and 288 to 291; these read DTPG and NKCD. Residues 234 to 237 are G3; sequence DTPG. The tract at residues 288-291 is G4; the sequence is NKCD. Positions 324–326 are G5; that stretch reads SAL. T688 carries the phosphothreonine modification.

Belongs to the TRAFAC class translation factor GTPase superfamily. Classic translation factor GTPase family. IF-2 subfamily. As to quaternary structure, monomer.

It is found in the mitochondrion. Its function is as follows. One of the essential components for the initiation of protein synthesis. Protects formylmethionyl-tRNA from spontaneous hydrolysis and promotes its binding to the 30S ribosomal subunits. Also involved in the hydrolysis of GTP during the formation of the 70S ribosomal complex. The protein is Translation initiation factor IF-2, mitochondrial (Mtif2) of Mus musculus (Mouse).